A 308-amino-acid polypeptide reads, in one-letter code: Porphobilinogen deaminase (308 aa).

An S-(dipyrrolylmethanemethyl)cysteine modification is found at Cys242.

The protein belongs to the HMBS family. As to quaternary structure, monomer. It depends on dipyrromethane as a cofactor.

The enzyme catalyses 4 porphobilinogen + H2O = hydroxymethylbilane + 4 NH4(+). The protein operates within porphyrin-containing compound metabolism; protoporphyrin-IX biosynthesis; coproporphyrinogen-III from 5-aminolevulinate: step 2/4. In terms of biological role, tetrapolymerization of the monopyrrole PBG into the hydroxymethylbilane pre-uroporphyrinogen in several discrete steps. This Alkalilimnicola ehrlichii (strain ATCC BAA-1101 / DSM 17681 / MLHE-1) protein is Porphobilinogen deaminase.